Here is a 124-residue protein sequence, read N- to C-terminus: uncharacterized protein (124 aa).

In terms of assembly, interacts with dil1.

This is an uncharacterized protein from Schizosaccharomyces pombe (strain 972 / ATCC 24843) (Fission yeast).